A 147-amino-acid polypeptide reads, in one-letter code: Interleukin-4 (147 aa).

The signal sequence occupies residues 1–24 (MGLSPHLAVTLFCFLICTGNGIHG). C47 and C87 are oxidised to a cystine. Residues N61, N90, and N117 are each glycosylated (N-linked (GlcNAc...) asparagine).

The protein belongs to the IL-4/IL-13 family.

It localises to the secreted. Functionally, participates in at least several B-cell activation processes as well as of other cell types. It is a costimulator of DNA-synthesis. It induces the expression of class II MHC molecules on resting B-cells. It enhances both secretion and cell surface expression of IgE and IgG1. It also regulates the expression of the low affinity Fc receptor for IgE (CD23) on both lymphocytes and monocytes. Positively regulates IL31RA expression in macrophages. Stimulates autophagy in dendritic cells by interfering with mTORC1 signaling and through the induction of RUFY4. The protein is Interleukin-4 (Il4) of Rattus norvegicus (Rat).